The chain runs to 246 residues: MSSQPLNVNEDEIAKFEQVASQWWDLTGDFKPLHQINPLRVQFISQHIALQVEGIDSKNGFYDMQIIDVGCGGGILSESLAKLGANVTGIDMGTEPLNVAKLHALETGVSINYQKITAEEKALENPGTFDVVTCMEMLEHVPDPASVIQACSTLVKPGGLIFFSTLNKSIKSYLLAILAAEKLLKIVPDGTHDHDKFIRPSQLIGWAEEHGLKCIDASGIHYNPITGNHKLNDSLDVNYILCCRKL.

S-adenosyl-L-methionine is bound by residues R40, G70, D91, and M135.

This sequence belongs to the methyltransferase superfamily. UbiG/COQ3 family.

The catalysed reaction is a 3-demethylubiquinol + S-adenosyl-L-methionine = a ubiquinol + S-adenosyl-L-homocysteine + H(+). It catalyses the reaction a 3-(all-trans-polyprenyl)benzene-1,2-diol + S-adenosyl-L-methionine = a 2-methoxy-6-(all-trans-polyprenyl)phenol + S-adenosyl-L-homocysteine + H(+). It participates in cofactor biosynthesis; ubiquinone biosynthesis. Functionally, O-methyltransferase that catalyzes the 2 O-methylation steps in the ubiquinone biosynthetic pathway. The polypeptide is Ubiquinone biosynthesis O-methyltransferase (Colwellia psychrerythraea (strain 34H / ATCC BAA-681) (Vibrio psychroerythus)).